Reading from the N-terminus, the 428-residue chain is Aspartate--tRNA(Asp) ligase (428 aa).

Residue Glu-166 participates in L-aspartate binding. Residues 188-191 form an aspartate region; sequence QLYK. Arg-210 serves as a coordination point for L-aspartate. Residues 210–212, 218–220, and Glu-351 each bind ATP; these read RAE and RHL. 2 residues coordinate Mg(2+): Glu-351 and Ser-354. The L-aspartate site is built by Ser-354 and Arg-358. ATP is bound at residue 399-402; that stretch reads GLER.

It belongs to the class-II aminoacyl-tRNA synthetase family. Type 2 subfamily. In terms of assembly, homodimer. It depends on Mg(2+) as a cofactor.

The protein resides in the cytoplasm. It catalyses the reaction tRNA(Asp) + L-aspartate + ATP = L-aspartyl-tRNA(Asp) + AMP + diphosphate. Its function is as follows. Catalyzes the attachment of L-aspartate to tRNA(Asp) in a two-step reaction: L-aspartate is first activated by ATP to form Asp-AMP and then transferred to the acceptor end of tRNA(Asp). The polypeptide is Aspartate--tRNA(Asp) ligase (Thermoplasma acidophilum (strain ATCC 25905 / DSM 1728 / JCM 9062 / NBRC 15155 / AMRC-C165)).